The chain runs to 684 residues: Cyclic nucleotide-gated channel alpha-1 (684 aa).

Topologically, residues 1 to 161 (MKTNIINTWH…PSGNTYYNWL (161 aa)) are cytoplasmic. Residues 34–145 (ACSSFSDDDN…TKEKKEEEKK (112 aa)) form a disordered region. Positions 39 to 54 (SDDDNGSLSEESENED) are enriched in acidic residues. The span at 105–145 (SKADDKNENKKDPEKKKKKEKEKEKKKKEEKTKEKKEEEKK) shows a compositional bias: basic and acidic residues. The chain crosses the membrane as a helical span at residues 162–183 (FCITLPVMYNWTMIIARACFDE). Residues 184–193 (LQSDYLEYWL) are Extracellular-facing. The chain crosses the membrane as a helical span at residues 194-214 (IFDYVSDVVYLADMFVRTRTG). At 215–239 (YLEQGLLVKDRMKLIEKYKANLQFK) the chain is on the cytoplasmic side. The chain crosses the membrane as a helical span at residues 240 to 258 (LDVLSVIPTDLLYIKFGWN). Topologically, residues 259–263 (YPEIR) are extracellular. The chain crosses the membrane as a helical span at residues 264-282 (LNRLLRISRMFEFFQRTET). The Cytoplasmic portion of the chain corresponds to 283-289 (RTNYPNI). The ion conduction pathway stretch occupies residues 287–395 (PNIFRISNLV…GNIGSMISNM (109 aa)). A helical transmembrane segment spans residues 290–313 (FRISNLVMYIVIIIHWNACVYYSI). At 314–336 (SKAIGFGNDTWVYPDVNDPEFGR) the chain is on the extracellular side. A glycan (N-linked (GlcNAc...) asparagine) is linked at Asn-321. 2 helical membrane-spanning segments follow: residues 337 to 371 (LARKYVYSLYWSTLTLTTIGETPPPVLDSEYIFVV) and 372 to 396 (VDFLIGVLIFATIVGNIGSMISNMN). Positions 354–357 (TIGE) are selectivity filter. The segment at 397-473 (AARAEFQSRV…DTLKKVRIFA (77 aa)) is C-linker. Over 397-684 (AARAEFQSRV…ESELTESLQD (288 aa)) the chain is Cytoplasmic. The segment at 477–597 (AGLLVELVLK…EEKGRQILMK (121 aa)) is cyclic nucleotide-binding domain. Gly-537, Ser-540, Arg-553, and Thr-554 together coordinate 3',5'-cyclic GMP. Residues Arg-553 and Thr-554 each coordinate 3',5'-cyclic AMP. The stretch at 615-669 (LEEKVTRMEGSVDLLQTRFARILAEYESMQQKLKQRLTKVEKFLKPLIETEFSAL) forms a coiled coil.

This sequence belongs to the cyclic nucleotide-gated cation channel (TC 1.A.1.5) family. CNGA1 subfamily. Forms heterotetrameric channels composed of CNGA1 and CNGB1 subunits with 3:1 stoichiometry. May also form cyclic nucleotide-activated homotetrameric channels, that are efficiently activated by saturating cGMP, but poorly activated by saturating cAMP compared to the heterotetramer with CNGB1. The channel binds Ca(2+)-bound CALM1 via CaM1 and CaM2 regions of the CNGB1 subunit; this interaction modulates the affinity of the channel for cNMPs in response to intracellular Ca(2+) levels. As to expression, rod cells in the retina and inner medulla of kidney.

The protein localises to the cell membrane. The catalysed reaction is Ca(2+)(in) = Ca(2+)(out). It carries out the reaction Na(+)(in) = Na(+)(out). It catalyses the reaction K(+)(in) = K(+)(out). The enzyme catalyses NH4(+)(in) = NH4(+)(out). The catalysed reaction is Rb(+)(in) = Rb(+)(out). It carries out the reaction Li(+)(in) = Li(+)(out). It catalyses the reaction Cs(+)(in) = Cs(+)(out). Its function is as follows. Pore-forming subunit of the rod cyclic nucleotide-gated channel. Mediates rod photoresponses at dim light converting transient changes in intracellular cGMP levels into electrical signals. In the dark, cGMP levels are high and keep the channel open enabling a steady inward current carried by Na(+) and Ca(2+) ions that leads to membrane depolarization and neurotransmitter release from synaptic terminals. Upon photon absorption cGMP levels decline leading to channel closure and membrane hyperpolarization that ultimately slows neurotransmitter release and signals the presence of light, the end point of the phototransduction cascade. Conducts cGMP- and cAMP-gated ion currents, with permeability for monovalent and divalent cations. The selectivity for Ca(2+) over Na(+) increases with cGMP concentrations, whereas the selectivity among monovalent ions is independent of the cGMP levels. The polypeptide is Cyclic nucleotide-gated channel alpha-1 (Cnga1) (Mus musculus (Mouse)).